The chain runs to 230 residues: Pyridoxal phosphate homeostasis protein (230 aa).

Lys-36 is modified (N6-(pyridoxal phosphate)lysine).

The protein belongs to the pyridoxal phosphate-binding protein YggS/PROSC family.

Perhaps involved in proline biosynthesis. Functionally, pyridoxal 5'-phosphate (PLP)-binding protein, which is involved in PLP homeostasis. This is Pyridoxal phosphate homeostasis protein from Pseudomonas aeruginosa (strain ATCC 15692 / DSM 22644 / CIP 104116 / JCM 14847 / LMG 12228 / 1C / PRS 101 / PAO1).